Here is a 154-residue protein sequence, read N- to C-terminus: Proteasome subunit beta type-4 (154 aa).

Residue Met1 is modified to N-acetylmethionine. A propeptide spanning residues 1–45 (MESILESRSGHWAGGPAPGQFYRIPPTPGSIVDPXSVLYGSPITR) is cleaved from the precursor. Tyr102 carries the phosphotyrosine modification.

Belongs to the peptidase T1B family. In terms of assembly, the 26S proteasome consists of a 20S proteasome core and two 19S regulatory subunits. The 20S proteasome core is a barrel-shaped complex made of 28 subunits that are arranged in four stacked rings. The two outer rings are each formed by seven alpha subunits, and the two inner rings are formed by seven beta subunits. The proteolytic activity is exerted by three beta-subunits PSMB5, PSMB6 and PSMB7. Forms a ternary complex with SMAD1 and OAZ1 before PSMB4 is incorporated into the 20S proteasome. Interacts with PRPF19.

Its subcellular location is the cytoplasm. The protein localises to the nucleus. Functionally, non-catalytic component of the 20S core proteasome complex involved in the proteolytic degradation of most intracellular proteins. This complex plays numerous essential roles within the cell by associating with different regulatory particles. Associated with two 19S regulatory particles, forms the 26S proteasome and thus participates in the ATP-dependent degradation of ubiquitinated proteins. The 26S proteasome plays a key role in the maintenance of protein homeostasis by removing misfolded or damaged proteins that could impair cellular functions, and by removing proteins whose functions are no longer required. Associated with the PA200 or PA28, the 20S proteasome mediates ubiquitin-independent protein degradation. This type of proteolysis is required in several pathways including spermatogenesis (20S-PA200 complex) or generation of a subset of MHC class I-presented antigenic peptides (20S-PA28 complex). SMAD1/OAZ1/PSMB4 complex mediates the degradation of the CREBBP/EP300 repressor SNIP1. The protein is Proteasome subunit beta type-4 (PSMB4) of Sus scrofa (Pig).